A 182-amino-acid chain; its full sequence is uncharacterized protein (182 aa).

The tract at residues 40–182 is disordered; sequence LLKTDDDDDD…EEIQRNQKGN (143 aa). Residues 52-86 show a composition bias toward low complexity; the sequence is NNININNNNATITTTSTTTTTTTTSTTKTFTISTD. A compositionally biased stretch (acidic residues) spans 87-100; that stretch reads NYDEDVNDDQDEGD. Low complexity-rich tracts occupy residues 104–134 and 148–157; these read NNNNNNNNNNNNNNNNNNNNNNSNNNNNNNN and DLDFNNQNNN. A compositionally biased stretch (basic and acidic residues) spans 165–182; the sequence is FLSKDDNIEEIQRNQKGN.

This is an uncharacterized protein from Dictyostelium discoideum (Social amoeba).